A 271-amino-acid chain; its full sequence is Hachiman protein HamA (271 aa).

In terms of biological role, component of antiviral defense system Hachiman, composed of HamA and HamB. Expression of Hachiman in B.subtilis (strain BEST7003) confers resistance to phages phi105, phi29, phi3T, rho14, SBSphiJ, SpBeta and SPR. The protein is Hachiman protein HamA of Bacillus cereus.